A 216-amino-acid polypeptide reads, in one-letter code: Ras-related protein Rab11C (216 aa).

A GTP-binding site is contributed by 19-26 (GDSGVGKS). The short motif at 41–49 (SKSTIGVEF) is the Effector region element. GTP contacts are provided by residues 67 to 71 (DTAGQ) and 125 to 128 (NKSD). S-geranylgeranyl cysteine attachment occurs at residues cysteine 213 and cysteine 214.

The protein belongs to the small GTPase superfamily. Rab family.

Its subcellular location is the cell membrane. This Lotus japonicus (Lotus corniculatus var. japonicus) protein is Ras-related protein Rab11C (RAB11C).